We begin with the raw amino-acid sequence, 974 residues long: MSSSPQNEAEAREKMRELMSRPPSSRPADFVNPLEKIEQLLTCPICLDRYKQPKLLPCQHTFCYPCLESCADTLHRNLKCPECRAEHNIPYDGVKAFQPNYTLTGFLEIHLQATPESAAEIEEYIHRYNLERCKICDEKADCEPCAHCDRKACKECRQTHMDMLKRDMSRLLNQVKRLANRITEASDNLSKGVDMMTMNCETTKAEIKEYFHRYQRDLKKKEDNFLMEVDTFQATETRNMSNLRDVLEIESSNMSEAVSRLDAAIKGECSIEDSELVRMKNTFTEGLEYLRNFQPDADELFNRKLRFSAGDDAAKLPAAITTSGELCVLVPQFSGRYLPLEQSYLPRPFRLPLESDSYRVKSDERASMRDREADRTSSRHSHRNPEPDESSIRYRRRQQLEDEAWNRLRNSSAAPSLLTTSVTADSSSRTSPWAADRVTRSVEPTKSRPTSLIVPNTETPRTVSPASKPPLPPQSVERVERTEDASPAPLPQLPIRKPPLPRQQSSNDDSLNEKVETIRRAHQQRQDASRAASRAVSSEESEGEDFPVSTNRGRIRIVCRAASVNRDDGLMSMIPGTGTIINVPPPQHQLPASAPITNGTSEQVAIPVTHFTGEEDESDIVVPAWLQRRRQRFQRSRTNPDIQAQFTSARVQQLLAERQSRLDSSTTTDEEKEKLAVLRQRGRSASREAGEWRARGRPRAVFGRKGAKDGELNWPRGICALSGGLVATCDSSNHRVCVFDKDGKFVRQFGGYGAGAGQLDSAAGLASSKLRVIVSDRYNHRISVFGLEGDHLFSFGGHGQGNAKFNNPWGVAVDDLGSIYVADKDNHRVQVFDKNGQFIAKFGSFGHLPGQLNSPLFIAVSRVTHHVYVSDSSNHRISVFDPHGVHLFSFGEEGFHGGQFKFPRGIAIDSQENLIIADSGNNRIQVFDAQGQFVSSFGTWGGGAGQLKGVEDVCVTADGSIVVTDRENHRIQIF.

Positions 1–29 (MSSSPQNEAEAREKMRELMSRPPSSRPAD) are disordered. Over residues 9 to 19 (AEAREKMRELM) the composition is skewed to basic and acidic residues. An RING-type zinc finger spans residues 43-84 (CPICLDRYKQPKLLPCQHTFCYPCLESCADTLHRNLKCPECR). Disordered regions lie at residues 360–395 (VKSD…IRYR) and 416–548 (SLLT…DFPV). The segment covering 416-431 (SLLTTSVTADSSSRTS) has biased composition (polar residues). The segment covering 437 to 446 (RVTRSVEPTK) has biased composition (basic and acidic residues). Positions 447 to 465 (SRPTSLIVPNTETPRTVSP) are enriched in polar residues. Residues 488–501 (APLPQLPIRKPPLP) show a composition bias toward pro residues. Residues 511 to 528 (LNEKVETIRRAHQQRQDA) are compositionally biased toward basic and acidic residues. Residues 529–538 (SRAASRAVSS) show a composition bias toward low complexity. NHL repeat units lie at residues 699 to 742 (RAVF…FDKD), 746 to 788 (VRQF…FGLE), 792 to 835 (LFSF…FDKN), 839 to 883 (IAKF…FDPH), 887 to 930 (LFSF…FDAQ), and 934 to 974 (VSSF…IQIF).

Interacts with ubc-13.

The sequence is that of RING finger protein nhl-1 from Caenorhabditis elegans.